A 412-amino-acid chain; its full sequence is MLKELEVNGKRFFLAPESNFWAIGEREEVERFYRERKDALLEEMQRYRFEVDIRTAYINPTESCNRNCPYCYIPAEIRERGTKMSYEKLEEILTVLAENGVERVIFHGAEPLMVKDEIFRAMEDFDFKYGIQTNATLLEEEDAELLMKKGASVGISLDSPYKETNDYLRGKGHYDAVMRALDFFDGYRSLNIIMTVNKHNFQHLPAMVDFLAGKVSVMLANPVRGTSPGGRELRPPEGFEDYYIKAIDRAIENTKSGRRIVIGDFANILLGLVAPTSRVLQCDISPCGGGRRFFAVSADGIYPCGEFIGMEEFRANLSALSDWSSLIEKFEVVRKRTVEQIEECRNCEFRNLCGAPCPAEIYAESGTMLRKSPYCEFYKKLALKAMDVIARGDVRNVLKLERMKAIYRVEDF.

The region spanning 50–264 is the Radical SAM core domain; the sequence is EVDIRTAYIN…KSGRRIVIGD (215 aa). [4Fe-4S] cluster-binding residues include C64, C68, and C71.

Belongs to the radical SAM superfamily. Anaerobic sulfatase-maturating enzyme family. It depends on [4Fe-4S] cluster as a cofactor.

This is an uncharacterized protein from Archaeoglobus fulgidus (strain ATCC 49558 / DSM 4304 / JCM 9628 / NBRC 100126 / VC-16).